Consider the following 64-residue polypeptide: Large ribosomal subunit protein bL35 (64 aa).

It belongs to the bacterial ribosomal protein bL35 family.

In Pseudomonas entomophila (strain L48), this protein is Large ribosomal subunit protein bL35.